Consider the following 89-residue polypeptide: UPF0237 protein Cgl1544/cg1742 (89 aa).

In terms of domain architecture, ACT spans 4-82 (IMTVTGQDHT…LVIRIQSEAL (79 aa)).

It belongs to the UPF0237 family.

The sequence is that of UPF0237 protein Cgl1544/cg1742 from Corynebacterium glutamicum (strain ATCC 13032 / DSM 20300 / JCM 1318 / BCRC 11384 / CCUG 27702 / LMG 3730 / NBRC 12168 / NCIMB 10025 / NRRL B-2784 / 534).